The primary structure comprises 676 residues: Symportin 1 (676 aa).

Residues 1–10 (MGKTRRNRVR) show a composition bias toward basic residues. A disordered region spans residues 1-28 (MGKTRRNRVRNRTDPIAKPVKPPTDPEL). The stretch at 183-216 (TILRLLFRLISADIAPQDIYEEAISCLTTLSEDN) is one ARM 1 repeat. The interval 325 to 385 (KGNQGSRESP…EDDEDDDDDS (61 aa)) is disordered. 2 stretches are compositionally biased toward acidic residues: residues 338 to 354 (ADEEWNGFDDADGDAMD) and 363 to 385 (EDQEEDYEEIDVKEDDEDDDDDS). The stretch at 420 to 453 (TAVPQLIRLSNLPIDSDESLTIQSHALSALNNIS) is one ARM 2 repeat.

The protein belongs to the nuclear import and ribosome assembly adapter family. In terms of assembly, component of a hexameric 5S RNP precursor complex, composed of 5S RNA, RRS1, RPF2, RPL5, RPL11 and SYO1; this complex acts as a precursor for ribosome assembly.

In terms of biological role, involved in ribosomal large subunit assembly. This chain is Symportin 1, found in Chaetomium thermophilum (strain DSM 1495 / CBS 144.50 / IMI 039719) (Thermochaetoides thermophila).